We begin with the raw amino-acid sequence, 299 residues long: Acidic endochitinase Pun g 14, amyloplastic (299 aa).

The transit peptide at 1-26 (MAKTLPFSRALLLSLSILLVARAISA) directs the protein to the amyloplast. In terms of domain architecture, GH18 spans 27–299 (GDIAIYWGQN…TYSTTIKDQV (273 aa)). 2 cysteine pairs are disulfide-bonded: C46–C93 and C76–C83. Residue E153 is the Proton donor of the active site. C185 and C216 are joined by a disulfide.

The protein belongs to the glycosyl hydrolase 18 family. Chitinase class III subfamily. Monomer. Highly expressed in seeds and to a lesser extent in the skin of the pomegranate fruit (at protein level). Not expressed in leaves or flesh of the fruit (at protein level).

It localises to the plastid. It is found in the amyloplast. It catalyses the reaction Random endo-hydrolysis of N-acetyl-beta-D-glucosaminide (1-&gt;4)-beta-linkages in chitin and chitodextrins.. With respect to regulation, activity is not affected by addition of 10 mM Ca(2+) or removal of Ca(2+). Hydrolyzes chitin. Probable calcium storage protein of the seeds. Binds calcium ions with high capacity and low affinity. Involved in seed germination. The polypeptide is Acidic endochitinase Pun g 14, amyloplastic (Punica granatum (Pomegranate)).